Here is a 163-residue protein sequence, read N- to C-terminus: Large ribosomal subunit protein uL10 (163 aa).

Belongs to the universal ribosomal protein uL10 family. In terms of assembly, part of the ribosomal stalk of the 50S ribosomal subunit. The N-terminus interacts with L11 and the large rRNA to form the base of the stalk. The C-terminus forms an elongated spine to which L12 dimers bind in a sequential fashion forming a multimeric L10(L12)X complex.

Forms part of the ribosomal stalk, playing a central role in the interaction of the ribosome with GTP-bound translation factors. The sequence is that of Large ribosomal subunit protein uL10 from Haemophilus ducreyi (strain 35000HP / ATCC 700724).